The sequence spans 360 residues: Peptide chain release factor 1 (360 aa).

Q235 bears the N5-methylglutamine mark.

This sequence belongs to the prokaryotic/mitochondrial release factor family. Post-translationally, methylated by PrmC. Methylation increases the termination efficiency of RF1.

It is found in the cytoplasm. Its function is as follows. Peptide chain release factor 1 directs the termination of translation in response to the peptide chain termination codons UAG and UAA. The polypeptide is Peptide chain release factor 1 (Dechloromonas aromatica (strain RCB)).